The primary structure comprises 178 residues: Aminoglycoside 2'-N-acetyltransferase (178 aa).

The 164-residue stretch at 8 to 171 (LHTSQLTLSE…VDFTASLYCD (164 aa)) folds into the N-acetyltransferase domain. Residues aspartate 32 and 79–80 (EA) contribute to the substrate site. Residues 81–83 (MVV) and 88–93 (RRQGIG) contribute to the CoA site. Substrate-binding positions include serine 114 and 148–149 (EE).

It belongs to the AAC(2')-I acetyltransferase family. In terms of assembly, homodimer.

It catalyses the reaction gentamicin C1a + acetyl-CoA = N(2')-acetylgentamicin C1a + CoA + H(+). Catalyzes the coenzyme A-dependent acetylation of the 2' hydroxyl or amino group of a broad spectrum of aminoglycosides. It confers resistance to aminoglycosides. The polypeptide is Aminoglycoside 2'-N-acetyltransferase (aac) (Providencia stuartii).